The following is a 233-amino-acid chain: 7-cyano-7-deazaguanine synthase (233 aa).

An ATP-binding site is contributed by F11–L21. Residues C199, C214, C217, and C220 each contribute to the Zn(2+) site.

The protein belongs to the QueC family. Zn(2+) serves as cofactor.

The enzyme catalyses 7-carboxy-7-deazaguanine + NH4(+) + ATP = 7-cyano-7-deazaguanine + ADP + phosphate + H2O + H(+). It participates in purine metabolism; 7-cyano-7-deazaguanine biosynthesis. In terms of biological role, catalyzes the ATP-dependent conversion of 7-carboxy-7-deazaguanine (CDG) to 7-cyano-7-deazaguanine (preQ(0)). This Herminiimonas arsenicoxydans protein is 7-cyano-7-deazaguanine synthase.